The sequence spans 254 residues: 3-oxo-5-alpha-steroid 4-dehydrogenase 2 (254 aa).

The next 4 helical transmembrane spans lie at 8–28, 72–92, 146–166, and 206–226; these read VPVL…LCLG, PRSL…AHYF, FSFG…SDYT, and LATW…FLGM.

The protein belongs to the steroid 5-alpha reductase family. In terms of tissue distribution, expressed in high levels in the prostate and many other androgen-sensitive tissues.

The protein resides in the microsome membrane. It localises to the endoplasmic reticulum membrane. It catalyses the reaction a 3-oxo-5alpha-steroid + NADP(+) = a 3-oxo-Delta(4)-steroid + NADPH + H(+). It carries out the reaction 17beta-hydroxy-5alpha-androstan-3-one + NADP(+) = testosterone + NADPH + H(+). The enzyme catalyses 5alpha-pregnane-3,20-dione + NADP(+) = progesterone + NADPH + H(+). Its function is as follows. Converts testosterone (T) into 5-alpha-dihydrotestosterone (DHT) and progesterone or corticosterone into their corresponding 5-alpha-3-oxosteroids. It plays a central role in sexual differentiation and androgen physiology. The sequence is that of 3-oxo-5-alpha-steroid 4-dehydrogenase 2 (Srd5a2) from Rattus norvegicus (Rat).